Consider the following 73-residue polypeptide: Large ribosomal subunit protein bL31 (73 aa).

C16, C18, C38, and C41 together coordinate Zn(2+).

The protein belongs to the bacterial ribosomal protein bL31 family. Type A subfamily. In terms of assembly, part of the 50S ribosomal subunit. The cofactor is Zn(2+).

Its function is as follows. Binds the 23S rRNA. The chain is Large ribosomal subunit protein bL31 from Streptomyces avermitilis (strain ATCC 31267 / DSM 46492 / JCM 5070 / NBRC 14893 / NCIMB 12804 / NRRL 8165 / MA-4680).